We begin with the raw amino-acid sequence, 350 residues long: D-alanine--D-alanine ligase (350 aa).

Positions 138–346 constitute an ATP-grasp domain; sequence KSAFSSAGLS…LEQLVHKLIQ (209 aa). 173-228 is an ATP binding site; it reads ERELNYPCFVKPANLGSSVGISKVRSRQELEAGLEQAAALDPRLVVEQGVNAREVE. Aspartate 299, glutamate 313, and asparagine 315 together coordinate Mg(2+).

The protein belongs to the D-alanine--D-alanine ligase family. Mg(2+) is required as a cofactor. Mn(2+) serves as cofactor.

The protein localises to the cytoplasm. It catalyses the reaction 2 D-alanine + ATP = D-alanyl-D-alanine + ADP + phosphate + H(+). It functions in the pathway cell wall biogenesis; peptidoglycan biosynthesis. Functionally, cell wall formation. The sequence is that of D-alanine--D-alanine ligase from Synechococcus sp. (strain CC9605).